A 55-amino-acid chain; its full sequence is Large ribosomal subunit protein bL33 (55 aa).

This sequence belongs to the bacterial ribosomal protein bL33 family.

This is Large ribosomal subunit protein bL33 from Mesorhizobium japonicum (strain LMG 29417 / CECT 9101 / MAFF 303099) (Mesorhizobium loti (strain MAFF 303099)).